A 218-amino-acid chain; its full sequence is uncharacterized protein (218 aa).

The ACT domain maps to glycine 4 to glycine 83.

This is an uncharacterized protein from Methanocaldococcus jannaschii (strain ATCC 43067 / DSM 2661 / JAL-1 / JCM 10045 / NBRC 100440) (Methanococcus jannaschii).